The primary structure comprises 466 residues: Probable aminotransferase Rv3329 (466 aa).

At lysine 294 the chain carries N6-(pyridoxal phosphate)lysine.

Belongs to the class-III pyridoxal-phosphate-dependent aminotransferase family. Pyridoxal 5'-phosphate serves as cofactor.

In terms of biological role, probable aminotransferase. This is Probable aminotransferase Rv3329 from Mycobacterium tuberculosis (strain ATCC 25618 / H37Rv).